The primary structure comprises 98 residues: uncharacterized protein (98 aa).

This is an uncharacterized protein from Bacillus subtilis (strain 168).